Consider the following 101-residue polypeptide: Small ribosomal subunit protein uS14A (101 aa).

The tract at residues Ile31–His73 is disordered. Positions Arg61–Pro70 are enriched in basic and acidic residues.

This sequence belongs to the universal ribosomal protein uS14 family. Part of the 30S ribosomal subunit. Contacts proteins S3 and S10.

Functionally, binds 16S rRNA, required for the assembly of 30S particles and may also be responsible for determining the conformation of the 16S rRNA at the A site. The sequence is that of Small ribosomal subunit protein uS14A from Mycolicibacterium vanbaalenii (strain DSM 7251 / JCM 13017 / BCRC 16820 / KCTC 9966 / NRRL B-24157 / PYR-1) (Mycobacterium vanbaalenii).